A 128-amino-acid chain; its full sequence is Arginine decarboxylase proenzyme (128 aa).

The Schiff-base intermediate with substrate; via pyruvic acid role is filled by serine 76. A Pyruvic acid (Ser); by autocatalysis modification is found at serine 76. The active-site Proton acceptor; for processing activity is histidine 81. The Proton donor; for catalytic activity role is filled by cysteine 96.

This sequence belongs to the prokaryotic AdoMetDC family. Type 1 subfamily. In terms of assembly, heterooctamer of four alpha and four beta chains arranged as a tetramer of alpha/beta heterodimers. It depends on pyruvate as a cofactor. Is synthesized initially as an inactive proenzyme. Formation of the active enzyme involves a self-maturation process in which the active site pyruvoyl group is generated from an internal serine residue via an autocatalytic post-translational modification. Two non-identical subunits are generated from the proenzyme in this reaction, and the pyruvate is formed at the N-terminus of the alpha chain, which is derived from the carboxyl end of the proenzyme. The post-translation cleavage follows an unusual pathway, termed non-hydrolytic serinolysis, in which the side chain hydroxyl group of the serine supplies its oxygen atom to form the C-terminus of the beta chain, while the remainder of the serine residue undergoes an oxidative deamination to produce ammonia and the pyruvoyl group blocking the N-terminus of the alpha chain.

The catalysed reaction is L-arginine + H(+) = agmatine + CO2. It participates in amine and polyamine biosynthesis; agmatine biosynthesis; agmatine from L-arginine: step 1/1. Specifically catalyzes the decarboxylation of L-arginine to agmatine. Has no S-adenosylmethionine decarboxylase (AdoMetDC) activity. The polypeptide is Arginine decarboxylase proenzyme (Metallosphaera sedula (strain ATCC 51363 / DSM 5348 / JCM 9185 / NBRC 15509 / TH2)).